We begin with the raw amino-acid sequence, 264 residues long: Thymidylate synthase (264 aa).

A dUMP-binding site is contributed by arginine 21. (6R)-5,10-methylene-5,6,7,8-tetrahydrofolate is bound at residue histidine 51. Residue 126-127 participates in dUMP binding; it reads RR. Residue cysteine 146 is the Nucleophile of the active site. Residues 166–169, asparagine 177, and 207–209 each bind dUMP; these read RSVD and HLY. Residue aspartate 169 participates in (6R)-5,10-methylene-5,6,7,8-tetrahydrofolate binding. Serine 263 contributes to the (6R)-5,10-methylene-5,6,7,8-tetrahydrofolate binding site.

Belongs to the thymidylate synthase family. Bacterial-type ThyA subfamily. In terms of assembly, homodimer.

The protein resides in the cytoplasm. It carries out the reaction dUMP + (6R)-5,10-methylene-5,6,7,8-tetrahydrofolate = 7,8-dihydrofolate + dTMP. It functions in the pathway pyrimidine metabolism; dTTP biosynthesis. Functionally, catalyzes the reductive methylation of 2'-deoxyuridine-5'-monophosphate (dUMP) to 2'-deoxythymidine-5'-monophosphate (dTMP) while utilizing 5,10-methylenetetrahydrofolate (mTHF) as the methyl donor and reductant in the reaction, yielding dihydrofolate (DHF) as a by-product. This enzymatic reaction provides an intracellular de novo source of dTMP, an essential precursor for DNA biosynthesis. This chain is Thymidylate synthase, found in Anoxybacillus flavithermus (strain DSM 21510 / WK1).